Here is a 500-residue protein sequence, read N- to C-terminus: MPSIFTHQWDTPVYKGSTSINTGLFINGEFVDGVKNTTIDVVNPANGKLITKISEATEADIDIAVEAAHKAFETTWGLNCSGSKRGDMLYKLAQLMEKNIDDLSAIEALDNGKTFLWAKSVDLSLSISTIKHYAGWADKNFGQVIETDEKKLTYSRHEPIGVVGQIIPWNFPLLMLAWKIGPALATGNCIVLKPSEFTPLSALRMCALIQEAGFPPGVVNVVTGYGSTTGQAISSHMKIDKVAFTGSTLVGRKVMEAAAKSNLKNVTLELGGKSPVVIFDDADLEQSVNWTAHGLFWNHGQACCAGTRIFVQEGIYDKFLQKFTDKIKEIKLGDPFGLGIDQGPQVSQIQYDRIMSYIESGRAEGATVHVGGERHGNEGYFIQPTIFTDTTPDMKIVKEEIFGPVGAVIKFKDGKEVIKQANDSNYGLAAAVFSQDINKAIETAHAFKAGTAWVNCANTIDAGVPFGGYKQSGIGRELGEYALHNYTNVKAVHVNLNWKM.

246–251 (GSTLVG) provides a ligand contact to NAD(+). E269 functions as the Proton acceptor in the catalytic mechanism. C303 acts as the Nucleophile in catalysis.

Belongs to the aldehyde dehydrogenase family.

The catalysed reaction is an aldehyde + NAD(+) + H2O = a carboxylate + NADH + 2 H(+). It functions in the pathway alcohol metabolism; ethanol degradation; acetate from ethanol: step 2/2. This is Aldehyde dehydrogenase (aldA) from Agaricus bisporus (White button mushroom).